We begin with the raw amino-acid sequence, 293 residues long: Ribonuclease H2 subunit B (293 aa).

Positions 251 to 278 (KRPQNSDITSSLLKKPNRKQATKKSKYF) are disordered. Positions 265 to 276 (KPNRKQATKKSK) are enriched in basic residues.

It belongs to the RNase H2 subunit B family. Component of the RNase H2 complex.

It is found in the nucleus. The protein resides in the cytoplasm. Non catalytic subunit of RNase H2, an endonuclease that specifically degrades the RNA of RNA:DNA hybrids. Participates in DNA replication, possibly by mediating the removal of lagging-strand Okazaki fragment RNA primers during DNA replication. Mediates the excision of single ribonucleotides from DNA:RNA duplexes. The sequence is that of Ribonuclease H2 subunit B (rnh202) from Schizosaccharomyces pombe (strain 972 / ATCC 24843) (Fission yeast).